A 1393-amino-acid polypeptide reads, in one-letter code: RNA polymerase II-associated protein 1 (1393 aa).

Disordered regions lie at residues 34-53 (KKGNRGGGDANSDRPPLQDH), 61-94 (NLPDLPPALVPSPPKRARPSPGHCLPEDEDPEER), and 266-295 (SHTQEQTGETASEEQRPGGPSANVTKEEPL). Over residues 64 to 74 (DLPPALVPSPP) the composition is skewed to pro residues. At S72 the chain carries Phosphoserine. A Phosphothreonine modification is found at T321. The segment at 496 to 531 (PSQEDKEDEDEDEECPAGKAKRKSPEEESRPPPDLA) is disordered. The segment covering 500–510 (DKEDEDEDEEC) has biased composition (acidic residues). The span at 518–531 (KSPEEESRPPPDLA) shows a compositional bias: basic and acidic residues. At S1121 the chain carries Phosphoserine.

It belongs to the RPAP1 family. As to quaternary structure, part of an RNA polymerase II complex that contains POLR2A, POLR2B, POLR2C, POLR2D, POLR2E, POLR2F, POLR2G, POLR2H, POLR2I, POLR2J, POLR2K, POLR2L, RPAP1, FCP1 plus the general transcription factors TFIIB and TFIIF.

Its subcellular location is the nucleus. Functionally, forms an interface between the RNA polymerase II enzyme and chaperone/scaffolding protein, suggesting that it is required to connect RNA polymerase II to regulators of protein complex formation. Required for interaction of the RNA polymerase II complex with acetylated histone H3. The polypeptide is RNA polymerase II-associated protein 1 (RPAP1) (Homo sapiens (Human)).